Consider the following 346-residue polypeptide: Ribosomal RNA small subunit methyltransferase H (346 aa).

S-adenosyl-L-methionine-binding positions include 47–49 (GGY), D65, F92, D113, and Q120. Positions 294–346 (AVEPGSDEVAGNPRARSAKLRAAERTDAPAHPDGDLAGLLPADLSQRRGRRRS) are disordered. The segment covering 314–327 (RAAERTDAPAHPDG) has biased composition (basic and acidic residues). Residues 328-337 (DLAGLLPADL) show a composition bias toward low complexity.

Belongs to the methyltransferase superfamily. RsmH family.

It is found in the cytoplasm. It carries out the reaction cytidine(1402) in 16S rRNA + S-adenosyl-L-methionine = N(4)-methylcytidine(1402) in 16S rRNA + S-adenosyl-L-homocysteine + H(+). Functionally, specifically methylates the N4 position of cytidine in position 1402 (C1402) of 16S rRNA. This is Ribosomal RNA small subunit methyltransferase H from Azorhizobium caulinodans (strain ATCC 43989 / DSM 5975 / JCM 20966 / LMG 6465 / NBRC 14845 / NCIMB 13405 / ORS 571).